Consider the following 160-residue polypeptide: MD-2-related lipid-recognition protein ROSY1 (160 aa).

The first 23 residues, 1 to 23 (MAISHTQLLLLLLVSLFFSPALC), serve as a signal peptide directing secretion.

Interacts with SYT1. Expressed exclusively in roots, in epidermis and cortex cells of the root elongation zone, and lateral root cap cells at the root tip.

The protein resides in the cytoplasm. Involved in the regulation of gravitropic response and basipetal auxin transport in roots. Involved in salt stress tolerance. May facilitate membrane trafficking and asymmetric cell elongation via SYT1. Binds stigmasterol and dipalmitoyl phosphoethanolamine (DPPE) in vitro. The sequence is that of MD-2-related lipid-recognition protein ROSY1 from Arabidopsis thaliana (Mouse-ear cress).